The sequence spans 85 residues: uncharacterized protein (85 aa).

The protein belongs to the ycf76 family.

Its subcellular location is the plastid. It is found in the chloroplast. This is an uncharacterized protein from Zea mays (Maize).